The following is a 460-amino-acid chain: DNA repair protein RadA (460 aa).

The C4-type zinc finger occupies 11–28 (CNECGADYPRWQGQCSAC). 102–109 (GNPGAGKS) is a binding site for ATP. The short motif at 258 to 262 (KNRFG) is the RadA KNRFG motif element. Positions 357–460 (DVFVNVVGGV…ADALSVFDDL (104 aa)) are lon-protease-like.

Belongs to the RecA family. RadA subfamily.

Functionally, DNA-dependent ATPase involved in processing of recombination intermediates, plays a role in repairing DNA breaks. Stimulates the branch migration of RecA-mediated strand transfer reactions, allowing the 3' invading strand to extend heteroduplex DNA faster. Binds ssDNA in the presence of ADP but not other nucleotides, has ATPase activity that is stimulated by ssDNA and various branched DNA structures, but inhibited by SSB. Does not have RecA's homology-searching function. The protein is DNA repair protein RadA of Salmonella typhimurium (strain LT2 / SGSC1412 / ATCC 700720).